The following is a 254-amino-acid chain: Thiazole synthase (254 aa).

The active-site Schiff-base intermediate with DXP is the Lys-95. Residues Gly-156, 182–183 (AG), and 204–205 (NT) each bind 1-deoxy-D-xylulose 5-phosphate.

It belongs to the ThiG family. In terms of assembly, homotetramer. Forms heterodimers with either ThiH or ThiS.

The protein resides in the cytoplasm. It carries out the reaction [ThiS sulfur-carrier protein]-C-terminal-Gly-aminoethanethioate + 2-iminoacetate + 1-deoxy-D-xylulose 5-phosphate = [ThiS sulfur-carrier protein]-C-terminal Gly-Gly + 2-[(2R,5Z)-2-carboxy-4-methylthiazol-5(2H)-ylidene]ethyl phosphate + 2 H2O + H(+). It functions in the pathway cofactor biosynthesis; thiamine diphosphate biosynthesis. In terms of biological role, catalyzes the rearrangement of 1-deoxy-D-xylulose 5-phosphate (DXP) to produce the thiazole phosphate moiety of thiamine. Sulfur is provided by the thiocarboxylate moiety of the carrier protein ThiS. In vitro, sulfur can be provided by H(2)S. The sequence is that of Thiazole synthase from Shewanella piezotolerans (strain WP3 / JCM 13877).